The primary structure comprises 295 residues: HTH-type transcriptional regulator TfdS (295 aa).

The HTH lysR-type domain maps to 1-58 (MEFRQLRYFVAAAEEGNVGAAARRLHISQPPVTRQIHALEQHLGVLLFERSARGVQLT). Residues 18 to 37 (VGAAARRLHISQPPVTRQIH) constitute a DNA-binding region (H-T-H motif).

It belongs to the LysR transcriptional regulatory family.

The protein resides in the cytoplasm. Involved in the regulation of 3-chlorocatechol degradation. Transcriptional regulator of tfdB expression. Acts as a repressor in the absence of its effector (either 2-cis-chlorodiene lactone or chloromaleylacetate) but acts as an activator when its effector is present. In Cupriavidus pinatubonensis (strain JMP 134 / LMG 1197) (Cupriavidus necator (strain JMP 134)), this protein is HTH-type transcriptional regulator TfdS (tfdS).